We begin with the raw amino-acid sequence, 2022 residues long: Transient receptor potential cation channel subfamily M member 6 (2022 aa).

Residues Met-1–Lys-741 lie on the Cytoplasmic side of the membrane. The chain crosses the membrane as a helical span at residues Asn-742 to Phe-762. Topologically, residues Lys-763–Lys-841 are extracellular. A helical membrane pass occupies residues Phe-842–Val-862. The Cytoplasmic portion of the chain corresponds to Glu-863 to Trp-905. A helical transmembrane segment spans residues Ile-906–Val-926. The Extracellular portion of the chain corresponds to Leu-927–Arg-939. A helical membrane pass occupies residues Leu-940–Asn-960. Topologically, residues Gln-961–Lys-972 are cytoplasmic. The chain crosses the membrane as a helical span at residues Met-973 to Val-993. The Extracellular segment spans residues Ala-994–Asp-1012. The pore-forming intramembrane region spans Ile-1013–Cys-1033. The Extracellular portion of the chain corresponds to Ser-1034–Pro-1047. Residues Phe-1048 to Phe-1068 form a helical membrane-spanning segment. Residues Phe-1069–Leu-2022 are Cytoplasmic-facing. The tract at residues Thr-1479–Gly-1516 is disordered. Over residues Asp-1483–Gln-1493 the composition is skewed to basic and acidic residues. Residues Ala-1494–Cys-1512 are compositionally biased toward polar residues. Positions Asn-1750 to Leu-1980 constitute an Alpha-type protein kinase domain. 5 residues coordinate ADP: Gly-1777, Gly-1778, Leu-1779, Arg-1780, and Lys-1804. Position 1851 is a phosphothreonine; by autocatalysis (Thr-1851). Positions 1876 and 1879 each coordinate ADP. His-1909 serves as a coordination point for Zn(2+). Asp-1923 functions as the Proton acceptor in the catalytic mechanism. Asp-1933 serves as a coordination point for ADP. His-1966, Cys-1968, and Cys-1972 together coordinate Zn(2+). A disordered region spans residues Glu-1997–Leu-2022. Basic and acidic residues predominate over residues Ile-1998–Pro-2016.

In the C-terminal section; belongs to the protein kinase superfamily. Alpha-type protein kinase family. ALPK subfamily. It in the N-terminal section; belongs to the transient receptor (TC 1.A.4) family. LTrpC subfamily. TRPM6 sub-subfamily. Homomers. Forms heteromers with TRPM7; TRPM6 increases the current amplitude of TRPM6/7 heteromers as compared to TRPM7 homomer. Interacts (via kinase domain) with RACK1. Autophosphorylated; autophosphorylation controlls the protein kinase activity of TRPM6 towards their substrates. Autophosphorylation of Thr-1851 in the kinase domain is essential for the inhibitory effect of RACK1. In terms of processing, the C-terminus of TRPM6 is proteolytically cleaved in vivo, in a cell type-specific fashion, releasing the kinase module from the transmembrane domain. The cleaved kinase fragments are translocated to the nucleus to phosphorylate histones and regulate gene expression. As to expression, highly expressed in kidney and colon. Isoform TRPM6a and isoform TRPM6b, are coexpressed with TRPM7 in kidney, and testis, and are also found in several cell lines of lung origin. Isoform TRPM6c is detected only in testis and in NCI-H510A small cell lung carcinoma cells.

The protein localises to the cell membrane. Its subcellular location is the apical cell membrane. It is found in the nucleus. The catalysed reaction is L-seryl-[protein] + ATP = O-phospho-L-seryl-[protein] + ADP + H(+). It carries out the reaction L-threonyl-[protein] + ATP = O-phospho-L-threonyl-[protein] + ADP + H(+). It catalyses the reaction Mg(2+)(in) = Mg(2+)(out). The enzyme catalyses Ca(2+)(in) = Ca(2+)(out). The catalysed reaction is Zn(2+)(in) = Zn(2+)(out). With respect to regulation, strongly inhibited by intracellular Mg(2+); unlikely to be active at physiological levels of intracellular Mg(2+). In the heteromeric TRPM6-TRPM7 channels complexes, TRPM7 are able to offset the very high sensitivity of TRPM6 to cytosolic Mg(2+) to physiologically relevant concentrations, whereas TRPM6 relieve TRPM7 from the inhibitory action of Mg-ATP. Consequently, the association of TRPM6 with TRPM7 allow for high constitutive activity of TRPM6/7 in the presence of physiological levels of Mg(2+) and Mg-ATP. The kinase activity is controlled through the autophosphorylation of a serine/threonine-rich region located to the N-terminal of the catalytic domain. Its function is as follows. Bifunctional protein that combines an ion channel with an intrinsic kinase domain, enabling it to modulate cellular functions either by conducting ions through the pore or by phosphorylating downstream proteins via its kinase domain. Crucial for Mg(2+) homeostasis. Has an important role in epithelial Mg(2+) transport and in the active Mg(2+) absorption in the gut and kidney. However, whether TRPM6 forms functional homomeric channels by itself or functions primarily as a subunit of heteromeric TRPM6-TRPM7 channels, is still under debate. Functionally, the C-terminal kinase domain can be cleaved from the channel segment in a cell-type-specific fashion. The cleaved kinase fragments can translocate to the nucleus, and bind chromatin-remodeling complex proteins to ultimately phosphorylate specific Ser/Thr residues of histones known to be functionally important for cell differentiation and development. The protein is Transient receptor potential cation channel subfamily M member 6 (TRPM6) of Homo sapiens (Human).